The chain runs to 455 residues: Zinc finger protein ZPR1 homolog (455 aa).

2 C4-type zinc fingers span residues 28–60 and 247–279; these read CPVC…CPHC and CPNC…CDRC.

It belongs to the ZPR1 family.

The protein resides in the nucleus. This chain is Zinc finger protein ZPR1 homolog, found in Caenorhabditis elegans.